A 222-amino-acid polypeptide reads, in one-letter code: Protein SHI RELATED SEQUENCE 4 (222 aa).

Zn(2+) is bound by residues Cys-72, Cys-75, Cys-83, Cys-88, Cys-92, and Cys-99. The segment at residues 72 to 99 (CQECGNQAKKGCTHGRCRTCCKSNGLHC) is a DNA-binding region (zn(2)-C6 fungal-type; degenerate). The interval 114–137 (RERQQQLQTPTSNPTGGSGRVGKY) is disordered. Polar residues predominate over residues 118-128 (QQLQTPTSNPT). Residues 191-194 (IAGH) carry the Required for homo- and heterodimerization motif.

It belongs to the SHI protein family. Expressed in cotyledon tips, leaf primordia, hydathodes, stipules, and lateral root primordia and weakly at the edges of petals and sepals.

Its subcellular location is the nucleus. Transcription activator that binds DNA on 5'-ACTCTAC-3' and promotes auxin homeostasis-regulating gene expression (e.g. YUC genes), as well as genes affecting stamen development, cell expansion and timing of flowering. Synergistically with other SHI-related proteins, regulates gynoecium, stamen and leaf development in a dose-dependent manner, controlling apical-basal patterning. Promotes style and stigma formation, and influences vascular development during gynoecium development. May also have a role in the formation and/or maintenance of the shoot apical meristem (SAM). This is Protein SHI RELATED SEQUENCE 4 (SRS4) from Arabidopsis thaliana (Mouse-ear cress).